The chain runs to 217 residues: Uridylate kinase (217 aa).

Position 5 to 9 (5 to 9 (KLTGR)) interacts with ATP. Glycine 37 contacts UMP. Positions 38 and 42 each coordinate ATP. UMP is bound by residues aspartate 59 and 107–113 (FQPGQST). ATP-binding residues include asparagine 134, tyrosine 139, and aspartate 142.

This sequence belongs to the UMP kinase family. In terms of assembly, homohexamer.

It localises to the cytoplasm. It catalyses the reaction UMP + ATP = UDP + ADP. It participates in pyrimidine metabolism; CTP biosynthesis via de novo pathway; UDP from UMP (UMPK route): step 1/1. With respect to regulation, inhibited by UTP. Catalyzes the reversible phosphorylation of UMP to UDP. This Pyrobaculum calidifontis (strain DSM 21063 / JCM 11548 / VA1) protein is Uridylate kinase.